The primary structure comprises 317 residues: Acetyl-coenzyme A carboxylase carboxyl transferase subunit alpha (317 aa).

Positions 39 to 293 (RLESKAAAAL…EEAIAEGLAG (255 aa)) constitute a CoA carboxyltransferase C-terminal domain.

Belongs to the AccA family. Acetyl-CoA carboxylase is a heterohexamer composed of biotin carboxyl carrier protein (AccB), biotin carboxylase (AccC) and two subunits each of ACCase subunit alpha (AccA) and ACCase subunit beta (AccD).

It is found in the cytoplasm. The enzyme catalyses N(6)-carboxybiotinyl-L-lysyl-[protein] + acetyl-CoA = N(6)-biotinyl-L-lysyl-[protein] + malonyl-CoA. Its pathway is lipid metabolism; malonyl-CoA biosynthesis; malonyl-CoA from acetyl-CoA: step 1/1. Functionally, component of the acetyl coenzyme A carboxylase (ACC) complex. First, biotin carboxylase catalyzes the carboxylation of biotin on its carrier protein (BCCP) and then the CO(2) group is transferred by the carboxyltransferase to acetyl-CoA to form malonyl-CoA. The chain is Acetyl-coenzyme A carboxylase carboxyl transferase subunit alpha from Methylobacterium sp. (strain 4-46).